Here is a 352-residue protein sequence, read N- to C-terminus: Holliday junction branch migration complex subunit RuvB (352 aa).

Residues 4-185 are large ATPase domain (RuvB-L); the sequence is PDRLISAVSG…FGIVQRLEFY (182 aa). Residues Ile-24, Arg-25, Gly-66, Lys-69, Thr-70, Thr-71, 132-134, Arg-175, Tyr-185, and Arg-222 contribute to the ATP site; that span reads EDF. Thr-70 provides a ligand contact to Mg(2+). The interval 186-256 is small ATPAse domain (RuvB-S); the sequence is NVEDLATIVS…IADKALNLLD (71 aa). The tract at residues 259-352 is head domain (RuvB-H); sequence ERGFDHLDRR…SDLFTSEDGN (94 aa). 3 residues coordinate DNA: Arg-295, Arg-314, and Arg-319.

The protein belongs to the RuvB family. In terms of assembly, homohexamer. Forms an RuvA(8)-RuvB(12)-Holliday junction (HJ) complex. HJ DNA is sandwiched between 2 RuvA tetramers; dsDNA enters through RuvA and exits via RuvB. An RuvB hexamer assembles on each DNA strand where it exits the tetramer. Each RuvB hexamer is contacted by two RuvA subunits (via domain III) on 2 adjacent RuvB subunits; this complex drives branch migration. In the full resolvosome a probable DNA-RuvA(4)-RuvB(12)-RuvC(2) complex forms which resolves the HJ.

The protein localises to the cytoplasm. It catalyses the reaction ATP + H2O = ADP + phosphate + H(+). Functionally, the RuvA-RuvB-RuvC complex processes Holliday junction (HJ) DNA during genetic recombination and DNA repair, while the RuvA-RuvB complex plays an important role in the rescue of blocked DNA replication forks via replication fork reversal (RFR). RuvA specifically binds to HJ cruciform DNA, conferring on it an open structure. The RuvB hexamer acts as an ATP-dependent pump, pulling dsDNA into and through the RuvAB complex. RuvB forms 2 homohexamers on either side of HJ DNA bound by 1 or 2 RuvA tetramers; 4 subunits per hexamer contact DNA at a time. Coordinated motions by a converter formed by DNA-disengaged RuvB subunits stimulates ATP hydrolysis and nucleotide exchange. Immobilization of the converter enables RuvB to convert the ATP-contained energy into a lever motion, pulling 2 nucleotides of DNA out of the RuvA tetramer per ATP hydrolyzed, thus driving DNA branch migration. The RuvB motors rotate together with the DNA substrate, which together with the progressing nucleotide cycle form the mechanistic basis for DNA recombination by continuous HJ branch migration. Branch migration allows RuvC to scan DNA until it finds its consensus sequence, where it cleaves and resolves cruciform DNA. The sequence is that of Holliday junction branch migration complex subunit RuvB from Pseudomonas paraeruginosa (strain DSM 24068 / PA7) (Pseudomonas aeruginosa (strain PA7)).